Consider the following 315-residue polypeptide: Tyrosine--tRNA ligase (315 aa).

Tyr-32 is a binding site for L-tyrosine. Residues 37–45 carry the 'HIGH' region motif; the sequence is PSGEIHLGH. 4 residues coordinate L-tyrosine: Tyr-152, Gln-156, Asp-159, and Gln-174. The 'KMSKS' region motif lies at 208–212; sequence KMSSS. Residue Ser-211 participates in ATP binding.

The protein belongs to the class-I aminoacyl-tRNA synthetase family. TyrS type 3 subfamily. As to quaternary structure, homodimer.

The protein localises to the cytoplasm. It carries out the reaction tRNA(Tyr) + L-tyrosine + ATP = L-tyrosyl-tRNA(Tyr) + AMP + diphosphate + H(+). In terms of biological role, catalyzes the attachment of tyrosine to tRNA(Tyr) in a two-step reaction: tyrosine is first activated by ATP to form Tyr-AMP and then transferred to the acceptor end of tRNA(Tyr). The protein is Tyrosine--tRNA ligase of Methanoculleus marisnigri (strain ATCC 35101 / DSM 1498 / JR1).